Consider the following 183-residue polypeptide: Ribosome rescue factor SmrB (183 aa).

The region spanning 98–173 (LDLHGLTQLQ…GDAALLVLIE (76 aa)) is the Smr domain.

The protein belongs to the SmrB family. As to quaternary structure, associates with collided ribosomes, but not with correctly translating polysomes.

Acts as a ribosome collision sensor. Detects stalled/collided disomes (pairs of ribosomes where the leading ribosome is stalled and a second ribosome has collided with it) and endonucleolytically cleaves mRNA at the 5' boundary of the stalled ribosome. Stalled/collided disomes form a new interface (primarily via the 30S subunits) that binds SmrB. Cleaved mRNA becomes available for tmRNA ligation, leading to ribosomal subunit dissociation and rescue of stalled ribosomes. This Salmonella arizonae (strain ATCC BAA-731 / CDC346-86 / RSK2980) protein is Ribosome rescue factor SmrB.